Consider the following 381-residue polypeptide: tRNA pseudouridine synthase D (381 aa).

D81 functions as the Nucleophile in the catalytic mechanism. The region spanning 160–335 (GMPNYFGPQR…TLGSRRFFWV (176 aa)) is the TRUD domain.

The protein belongs to the pseudouridine synthase TruD family.

The catalysed reaction is uridine(13) in tRNA = pseudouridine(13) in tRNA. Functionally, responsible for synthesis of pseudouridine from uracil-13 in transfer RNAs. In Helicobacter pylori (strain Shi470), this protein is tRNA pseudouridine synthase D.